Reading from the N-terminus, the 357-residue chain is Transcription factor HHO1 (357 aa).

2 disordered regions span residues 94 to 117 (TSIE…ETDI) and 171 to 198 (NNNI…RKNR). The span at 96 to 109 (IEEEVDDKDDDDEE) shows a compositional bias: acidic residues. The span at 171 to 182 (NNNIKSPVTTSD) shows a compositional bias: polar residues. Positions 193 to 253 (GQRKNRRCWS…HLQKYRLHAR (61 aa)) constitute an HTH myb-type domain. Residues 224–249 (PKQIRDIMKVDGLTNDEVKSHLQKYR) constitute a DNA-binding region (H-T-H motif).

The protein resides in the nucleus. In terms of biological role, probable factor involved in nitrate and phosphate signaling in roots. Integrates nitrate and phosphate starvation responses and adaptation of root architecture, depending on nutrient availabilities. Acts downstream of the nitrate sensor and transporter NPF6.3/NRT1.1. Represses primary root development in response to phosphate deficiency conditions, only when nitrate is present. The sequence is that of Transcription factor HHO1 from Arabidopsis thaliana (Mouse-ear cress).